We begin with the raw amino-acid sequence, 163 residues long: Interleukin-17F (163 aa).

Positions 1 to 30 (MTVKTLHGPAMVKYLLLSILGLAFLSEAAA) are cleaved as a signal peptide. The N-linked (GlcNAc...) asparagine glycan is linked to asparagine 83. Intrachain disulfides connect cysteine 102-cysteine 152 and cysteine 107-cysteine 154.

The protein belongs to the IL-17 family. In terms of assembly, homodimer; disulfide-linked. Heterodimer with IL17A (IL17A-IL17F). Forms complexes with IL17RA and IL17RC receptors with 2:1 binding stoichiometry: two receptor chains for one interleukin molecule. IL17F homodimer forms predominantly complexes with IL17RC homodimer, whereas IL17A-IL17F favors complexes with IL17RA-IL17RC. IL17RA and IL17RC chains cannot distinguish between IL17A and IL17F molecules, potentially enabling the formation of topologically distinct complexes. As to expression, expressed in T-helper 1 and T-helper 2 cells, basophils and mast cells.

It localises to the secreted. Functionally, effector cytokine of innate and adaptive immune system involved in antimicrobial host defense and maintenance of tissue integrity. IL17A-IL17F signals via IL17RA-IL17RC heterodimeric receptor complex, triggering homotypic interaction of IL17RA and IL17RC chains with TRAF3IP2 adapter through SEFIR domains. This leads to downstream TRAF6-mediated activation of NF-kappa-B and MAPkinase pathways ultimately resulting in transcriptional activation of cytokines, chemokines, antimicrobial peptides and matrix metalloproteinases, with potential strong immune inflammation. IL17A-IL17F is primarily involved in host defense against extracellular bacteria and fungi by inducing neutrophilic inflammation. As signature effector cytokine of T-helper 17 cells (Th17), primarily induces neutrophil activation and recruitment at infection and inflammatory sites. Stimulates the production of antimicrobial beta-defensins DEFB1, DEFB103A, and DEFB104A by mucosal epithelial cells, limiting the entry of microbes through the epithelial barriers. IL17F homodimer can signal via IL17RC homodimeric receptor complex, triggering downstream activation of TRAF6 and NF-kappa-B signaling pathway. Via IL17RC induces transcriptional activation of IL33, a potent cytokine that stimulates group 2 innate lymphoid cells and adaptive T-helper 2 cells involved in pulmonary allergic response to fungi. Likely via IL17RC, promotes sympathetic innervation of peripheral organs by coordinating the communication between gamma-delta T cells and parenchymal cells. Stimulates sympathetic innervation of thermogenic adipose tissue by driving TGFB1 expression. Regulates the composition of intestinal microbiota and immune tolerance by inducing antimicrobial proteins that specifically control the growth of commensal Firmicutes and Bacteroidetes. The protein is Interleukin-17F (IL17F) of Homo sapiens (Human).